The following is a 641-amino-acid chain: METKYLDLLAQKYDCEEKVVTEIINLKAILNLPKGTEHFVSDLHGEYQAFQHVLRNGSGRVKEKIRDIFSGVIYDREIDELAALVYYPEDKLKLIKHDFDTKEALNEWYKETIHRMIKLVSYCSSKYTRSKLRKALPAQFAYISEELLYKTEQAANKEQYYSEIIEQIIALGQADKLITGLAYSTQRLVVDHLHVVGDIYDRGPQPDKIMEELINYHSVDIQWGNHDVLWIGAYSGSKVCLANIIRICARYDNLDIIEDVYGINLRPLLNLAEKYYDDNPSFRPKADENRPEDEIKQITKIHQAIAMIQFKLESPIIKRRPNFNMEERLLLEKIDYDRNEITLNGKTYQLENTCFATVNPKQPDELLEEEAEVMDKLLFSVQNSEKLGRHMNFMMKKGSLYLKYNGNLLIHGCIPVDENGSMETMMIEDKAYAGRELLDVFERFLREAFAHPEETDDLATDMTWYLWTGEYSSLFGKRAMTTFERYFIKEKETHKEKKNPYYYLREDEAACRNILMEFGLNPDHGHIINGHTPVKEIEGEDPIKANGKMIVIDGGFSKAYQSTTGIAGYTLLYNSYGMQLVAHKHFNSKAEVLSTGTDVLTVKRLVDKELERKKVKETNVGEELMKEVAILEKLREYRYMK.

This sequence belongs to the FBPase class 3 family. Mn(2+) serves as cofactor.

The enzyme catalyses beta-D-fructose 1,6-bisphosphate + H2O = beta-D-fructose 6-phosphate + phosphate. It functions in the pathway carbohydrate biosynthesis; gluconeogenesis. The chain is Fructose-1,6-bisphosphatase class 3 from Bacillus velezensis (strain DSM 23117 / BGSC 10A6 / LMG 26770 / FZB42) (Bacillus amyloliquefaciens subsp. plantarum).